The chain runs to 138 residues: DNA-directed RNA polymerase subunit omega (138 aa).

This sequence belongs to the RNA polymerase subunit omega family. In terms of assembly, the RNAP catalytic core consists of 2 alpha, 1 beta, 1 beta' and 1 omega subunit. When a sigma factor is associated with the core the holoenzyme is formed, which can initiate transcription.

The catalysed reaction is RNA(n) + a ribonucleoside 5'-triphosphate = RNA(n+1) + diphosphate. Its function is as follows. Promotes RNA polymerase assembly. Latches the N- and C-terminal regions of the beta' subunit thereby facilitating its interaction with the beta and alpha subunits. This is DNA-directed RNA polymerase subunit omega from Thermodesulfovibrio yellowstonii (strain ATCC 51303 / DSM 11347 / YP87).